The sequence spans 626 residues: MCGIVGYIGPQGAAQILLQGLQKLEYRGYDSAGIATLNEGELLCVRAKGKLQNLVEKVEQLDIVAHVGIGHTRWATHGKPEEYNAHPHRDSRDRLAVVQNGIIENYRELRDQLQARGHIFRSETDTEVIPHLIAELLPETPTANGLLEAVRQAVHQLEGAFAIAVICADYPDELIVARQQAPLVIGFGQGEFFCASDTPAIIPYTRAVLPLENGELARLTPTGVEVYDFEGHRLRKTPRTLNWNPVMVEKQGFKHYMLKEIYEQPGVVRACLENYLRADWEVASPFSPVQLNLPPSLLDNLQHIQIVACGTSWHAGLVGKYLLEQVAQIPTSVQYASEFRYAPPPLLPHTLTIGVTQSGETADTLAALEMELKRRQGLDGALQPRLLGITNRPESSLGHLVPHIIDTRAGIEIGVAATKTFVAQLMAFYLLTLELSWQRQSCDRSRLAELVTGLRQLPAQMEQILESQERYIEALSHDFWETQDFIFLGRGINFPIALEGALKLKEISYIHAEGYPAGEMKHGPIALLDAKVPVVTIAMPGSVFEKVLSNAQEARARDARLIGVTPLDEAEAQHTFDNLLPVPEVDELLSPILTVIPLQLLAYHIAARRGLDVDQPRNLAKSVTVE.

Cys-2 (nucleophile; for GATase activity) is an active-site residue. In terms of domain architecture, Glutamine amidotransferase type-2 spans Cys-2–Thr-222. SIS domains lie at Leu-293–Ser-441 and Tyr-471–Pro-616. Lys-621 (for Fru-6P isomerization activity) is an active-site residue.

As to quaternary structure, homodimer.

The protein localises to the cytoplasm. The enzyme catalyses D-fructose 6-phosphate + L-glutamine = D-glucosamine 6-phosphate + L-glutamate. Functionally, catalyzes the first step in hexosamine metabolism, converting fructose-6P into glucosamine-6P using glutamine as a nitrogen source. This Thermosynechococcus vestitus (strain NIES-2133 / IAM M-273 / BP-1) protein is Glutamine--fructose-6-phosphate aminotransferase [isomerizing].